A 903-amino-acid polypeptide reads, in one-letter code: FIGNL1-interacting regulator of recombination and mitosis (903 aa).

Ser-101 and Ser-795 each carry phosphoserine. At Lys-843 the chain carries N6-acetyllysine.

As to quaternary structure, interacts (via its N-terminal region) with PLK1; controls PLK1 kinase activity. Interacts (via the KVVXF motif) with PPP1CC; controls PLK1 kinase activity. Interacts with FIGNL1; may regulate homologous recombination. Post-translationally, phosphorylation at Ser-101 by PLK1 strengthens FIRRM-PLK1 interaction. Phosphorylation at Ser-795 by PLK1 negatively regulates its interaction with PPP1CC.

The protein localises to the chromosome. It is found in the centromere. Its subcellular location is the kinetochore. It localises to the nucleus. The protein resides in the midbody. The protein localises to the cytoplasm. It is found in the cytoskeleton. Its subcellular location is the spindle. In terms of biological role, regulates PLK1 kinase activity at kinetochores and promotes faithful chromosome segregation in prometaphase by bridging kinase and phosphatase activities. Phosphorylation of FIRRM by PLK1 negatively regulates its interaction with the phosphatase, PPP1CC, thus creating a negative feedback loop for maintaining proper PLK1 kinase activity during mitosis. In complex with FIGL1 may regulate homologous recombination. The polypeptide is FIGNL1-interacting regulator of recombination and mitosis (Mus musculus (Mouse)).